The following is a 465-amino-acid chain: Argininosuccinate lyase (465 aa).

Belongs to the lyase 1 family. Argininosuccinate lyase subfamily.

It localises to the cytoplasm. The catalysed reaction is 2-(N(omega)-L-arginino)succinate = fumarate + L-arginine. Its pathway is amino-acid biosynthesis; L-arginine biosynthesis; L-arginine from L-ornithine and carbamoyl phosphate: step 3/3. The protein is Argininosuccinate lyase of Methanosphaera stadtmanae (strain ATCC 43021 / DSM 3091 / JCM 11832 / MCB-3).